Consider the following 283-residue polypeptide: Probable cytochrome c oxidase subunit 3 (283 aa).

6 helical membrane-spanning segments follow: residues 26–46 (PWPV…VSFM), 51–71 (FNIY…YSWW), 94–114 (IGMA…FASF), 179–199 (CVTA…MQAY), 217–237 (FYLA…FLII), and 261–281 (AWYW…VYIF).

Belongs to the cytochrome c oxidase subunit 3 family.

Its subcellular location is the cell membrane. It carries out the reaction 4 Fe(II)-[cytochrome c] + O2 + 8 H(+)(in) = 4 Fe(III)-[cytochrome c] + 2 H2O + 4 H(+)(out). This chain is Probable cytochrome c oxidase subunit 3 (ctaE), found in Rickettsia conorii (strain ATCC VR-613 / Malish 7).